The sequence spans 556 residues: Non-structural maintenance of chromosome element 5 (556 aa).

As to quaternary structure, component of the Smc5-Smc6 complex which consists of KRE29, MMS21, NSE1, NSE3, NSE4, NSE5, SMC5 and SMC6. Interacts with KRE29.

The protein resides in the nucleus. The protein localises to the chromosome. In terms of biological role, acts in a DNA repair pathway for removal of UV-induced DNA damage that is distinct from classical nucleotide excision repair and in repair of ionizing radiation damage. Functions in homologous recombination repair of DNA double strand breaks and in recovery of stalled replication forks. The protein is Non-structural maintenance of chromosome element 5 (NSE5) of Saccharomyces cerevisiae (strain ATCC 204508 / S288c) (Baker's yeast).